We begin with the raw amino-acid sequence, 283 residues long: Polyamine aminopropyltransferase (283 aa).

Positions 3-236 (GIWFSELQTP…GLWAFSLGSK (234 aa)) constitute a PABS domain. Residue Q32 coordinates S-methyl-5'-thioadenosine. Residues H63 and D87 each coordinate spermidine. S-methyl-5'-thioadenosine is bound by residues E107 and 138-139 (DG). D156 acts as the Proton acceptor in catalysis. Residue 156-159 (DSTD) coordinates spermidine. An S-methyl-5'-thioadenosine-binding site is contributed by P163.

Belongs to the spermidine/spermine synthase family. In terms of assembly, homodimer or homotetramer.

The protein localises to the cytoplasm. It carries out the reaction S-adenosyl 3-(methylsulfanyl)propylamine + putrescine = S-methyl-5'-thioadenosine + spermidine + H(+). It functions in the pathway amine and polyamine biosynthesis; spermidine biosynthesis; spermidine from putrescine: step 1/1. In terms of biological role, catalyzes the irreversible transfer of a propylamine group from the amino donor S-adenosylmethioninamine (decarboxy-AdoMet) to putrescine (1,4-diaminobutane) to yield spermidine. The sequence is that of Polyamine aminopropyltransferase from Moorella thermoacetica (strain ATCC 39073 / JCM 9320).